The chain runs to 496 residues: Probable CtpA-like serine protease (496 aa).

Positions 1–16 are enriched in basic and acidic residues; the sequence is MDDKQHTSSSDDERAE. A disordered region spans residues 1 to 27; it reads MDDKQHTSSSDDERAEIATSNQDQQTN. The span at 18–27 shows a compositional bias: polar residues; the sequence is ATSNQDQQTN. A helical membrane pass occupies residues 39 to 59; the sequence is FISILIGTILITAVITVVAYI. Residues 124 to 206 form the PDZ domain; that stretch reads TKSFNEGVSG…TEVTLTVQRG (83 aa). Active-site charge relay system residues include Ser-329, Asp-340, and Lys-354.

Belongs to the peptidase S41A family.

It is found in the cell membrane. The protein is Probable CtpA-like serine protease of Staphylococcus aureus (strain bovine RF122 / ET3-1).